A 370-amino-acid polypeptide reads, in one-letter code: Zinc finger protein 830 (370 aa).

Disordered stretches follow at residues 1-21 and 75-220; these read MASS…QEEL and HRER…LVPH. N-acetylalanine is present on Ala2. Residues 16-40 adopt a coiled-coil conformation; sequence VNQEELRRLMKEKQRLSTNRKRIES. The C2H2-type zinc-finger motif lies at 53–75; sequence CALCNTPVKSELLWQTHVLGKQH. Polar residues predominate over residues 90 to 99; sequence QGPSAGTAPQ. Residues 104 to 115 show a composition bias toward basic and acidic residues; that stretch reads KTTDVESQDAKK. Polar residues predominate over residues 121-134; that stretch reads DQVQPSTSASSANF. Over residues 156-171 the composition is skewed to acidic residues; that stretch reads DYEEEEEEEEEEELGG. A compositionally biased stretch (basic and acidic residues) spans 172–191; it reads GEERRDSSKHLPDAQGREHS. The segment covering 196 to 212 has biased composition (polar residues); that stretch reads RETTSNVLPNDPFNTNP. Ser223 is modified (phosphoserine). Residues 310-338 adopt a coiled-coil conformation; sequence IECYRRVEKLRNRQDEIKNKLKEVLTIKE. Ser349 and Ser360 each carry phosphoserine.

Component of the XAB2 complex, a multimeric protein complex composed of XAB2, PRPF19, AQR, ZNF830, ISY1, and PPIE; this complex binds preferentially to RNA. Interacts with XAB2. Identified in a pentameric intron-binding (IB) complex composed of AQR, XAB2, ISY1, ZNF830 and PPIE that is incorporated into the spliceosome as a preassembled complex. The IB complex does not contain PRPF19. Post-translationally, phosphorylated in response to DNA damage by the cell cycle checkpoint kinases ATR/ATM.

Its subcellular location is the nucleus. The protein resides in the chromosome. The protein localises to the nucleus speckle. Functionally, may play a role in pre-mRNA splicing as component of the spliceosome. Acts as an important regulator of the cell cycle that participates in the maintenance of genome integrity. During cell cycle progression in embryonic fibroblast, prevents replication fork collapse, double-strand break formation and cell cycle checkpoint activation. Controls mitotic cell cycle progression and cell survival in rapidly proliferating intestinal epithelium and embryonic stem cells. During the embryo preimplantation, controls different aspects of M phase. During early oocyte growth, plays a role in oocyte survival by preventing chromosomal breaks formation, activation of TP63 and reduction of transcription. This is Zinc finger protein 830 from Rattus norvegicus (Rat).